Reading from the N-terminus, the 305-residue chain is UDP-N-acetylenolpyruvoylglucosamine reductase (305 aa).

The 169-residue stretch at 22 to 190 (KVGGAADFFA…LSARFRLQAG (169 aa)) folds into the FAD-binding PCMH-type domain. Residue Arg169 is part of the active site. Catalysis depends on Ser220, which acts as the Proton donor. The active site involves Glu290.

It belongs to the MurB family. The cofactor is FAD.

It localises to the cytoplasm. The catalysed reaction is UDP-N-acetyl-alpha-D-muramate + NADP(+) = UDP-N-acetyl-3-O-(1-carboxyvinyl)-alpha-D-glucosamine + NADPH + H(+). It participates in cell wall biogenesis; peptidoglycan biosynthesis. Functionally, cell wall formation. The chain is UDP-N-acetylenolpyruvoylglucosamine reductase from Synechococcus sp. (strain RCC307).